Reading from the N-terminus, the 343-residue chain is Cysteine proteinase 1 (343 aa).

The first 18 residues, 1 to 18, serve as a signal peptide directing secretion; it reads MKVILLFVLAVFTVFVSS. The propeptide at 19 to 117 is activation peptide; the sequence is RGIPLEEQSQ…DYLDDEFINS (99 aa). Disulfide bonds link C139-C190, C173-C224, and C279-C332. Residue C142 is part of the active site. Catalysis depends on residues H286 and N311.

It belongs to the peptidase C1 family. Post-translationally, phosphoglycosylated, contains GlcNAc-alpha-1-P-Ser residues.

It is found in the lysosome. Its function is as follows. Cysteine proteinases 1 and 2 are believed to participate in the breakdown of protein during differentiation of Dictyostelium as a response to starvation. The protein is Cysteine proteinase 1 (cprA) of Dictyostelium discoideum (Social amoeba).